The sequence spans 537 residues: Tyrosine-protein kinase Fyn (537 aa).

Glycine 2 carries N-myristoyl glycine lipidation. S-palmitoyl cysteine attachment occurs at residues cysteine 3 and cysteine 6. Position 12 is a phosphothreonine; by PKC (threonine 12). A phosphoserine mark is found at serine 21 and serine 26. The 62-residue stretch at 82-143 (TGVTLFVALY…PSNYVAPVDS (62 aa)) folds into the SH3 domain. The region spanning 149–246 (WYFGKLGRKD…GLCCRLVVPC (98 aa)) is the SH2 domain. Phosphotyrosine is present on tyrosine 185. One can recognise a Protein kinase domain in the interval 271-524 (LQLIKRLGNG…YLQGFLEDYF (254 aa)). Residues 277–285 (LGNGQFGEV) and lysine 299 each bind ATP. The active-site Proton acceptor is the aspartate 390. Residue tyrosine 420 is modified to Phosphotyrosine; by autocatalysis. Tyrosine 531 carries the post-translational modification Phosphotyrosine; by CSK.

The protein belongs to the protein kinase superfamily. Tyr protein kinase family. SRC subfamily. Interacts (via its SH3 domain) with PIK3R1 and PRMT8. Interacts with FYB1, PAG1, and SH2D1A. Interacts with CD79A (tyrosine-phosphorylated form); the interaction increases FYN activity. Interacts (via SH2 domain) with CSF1R (tyrosine phosphorylated). Interacts with TOM1L1 (phosphorylated form). Interacts with KDR (tyrosine phosphorylated). Interacts (via SH3 domain) with KLHL2 (via N-terminus). Interacts with SH2D1A and SLAMF1. Interacts with ITCH; the interaction phosphorylates ITCH and negatively regulates its activity. Interacts with FASLG. Interacts with RUNX3. Interacts with KIT. Interacts with EPHA8; possible downstream effector of EPHA8 in regulation of cell adhesion. Interacts with PTK2/FAK1; this interaction leads to PTK2/FAK1 phosphorylation and activation. Interacts with CAV1; this interaction couples integrins to the Ras-ERK pathway. Interacts with UNC119. Interacts (via SH2 domain) with PTPRH (phosphorylated form). Interacts with PTPRO (phosphorylated form). Interacts with PTPRB (phosphorylated form). Interacts with FYB2. Interacts with DSCAM. Interacts with SKAP1 and FYB1; this interaction promotes the phosphorylation of CLNK. Interacts with NEDD9; in the presence of PTK2. It depends on Mn(2+) as a cofactor. Post-translationally, autophosphorylated at Tyr-420. Phosphorylation on the C-terminal tail at Tyr-531 by CSK maintains the enzyme in an inactive state. PTPRC/CD45 dephosphorylates Tyr-531 leading to activation. Ultraviolet B (UVB) strongly increase phosphorylation at Thr-12 and kinase activity, and promotes translocation from the cytoplasm to the nucleus. Dephosphorylation at Tyr-420 by PTPN2 negatively regulates T-cell receptor signaling. Phosphorylated at tyrosine residues, which can be enhanced by NTN1. In terms of processing, palmitoylated. Palmitoylation at Cys-3 and Cys-6, probably by ZDHHC21, regulates subcellular location.

It localises to the cytoplasm. The protein resides in the nucleus. Its subcellular location is the cell membrane. The protein localises to the perikaryon. The catalysed reaction is L-tyrosyl-[protein] + ATP = O-phospho-L-tyrosyl-[protein] + ADP + H(+). Its activity is regulated as follows. Inhibited by phosphorylation of Tyr-531 by leukocyte common antigen and activated by dephosphorylation of this site. Non-receptor tyrosine-protein kinase that plays a role in many biological processes including regulation of cell growth and survival, cell adhesion, integrin-mediated signaling, cytoskeletal remodeling, cell motility, immune response and axon guidance. Inactive FYN is phosphorylated on its C-terminal tail within the catalytic domain. Following activation by PKA, the protein subsequently associates with PTK2/FAK1, allowing PTK2/FAK1 phosphorylation, activation and targeting to focal adhesions. Involved in the regulation of cell adhesion and motility through phosphorylation of CTNNB1 (beta-catenin) and CTNND1 (delta-catenin). Regulates cytoskeletal remodeling by phosphorylating several proteins including the actin regulator WAS and the microtubule-associated proteins MAP2 and MAPT. Promotes cell survival by phosphorylating AGAP2/PIKE-A and preventing its apoptotic cleavage. Participates in signal transduction pathways that regulate the integrity of the glomerular slit diaphragm (an essential part of the glomerular filter of the kidney) by phosphorylating several slit diaphragm components including NPHS1, KIRREL1 and TRPC6. Plays a role in neural processes by phosphorylating DPYSL2, a multifunctional adapter protein within the central nervous system, ARHGAP32, a regulator for Rho family GTPases implicated in various neural functions, and SNCA, a small pre-synaptic protein. Involved in reelin signaling by mediating phosphorylation of DAB1 following reelin (RELN)-binding to its receptor. Participates in the downstream signaling pathways that lead to T-cell differentiation and proliferation following T-cell receptor (TCR) stimulation. Phosphorylates PTK2B/PYK2 in response to T-cell receptor activation. Also participates in negative feedback regulation of TCR signaling through phosphorylation of PAG1, thereby promoting interaction between PAG1 and CSK and recruitment of CSK to lipid rafts. CSK maintains LCK and FYN in an inactive form. Promotes CD28-induced phosphorylation of VAV1. In mast cells, phosphorylates CLNK after activation of immunoglobulin epsilon receptor signaling. Can also promote CD244-mediated NK cell activation. The polypeptide is Tyrosine-protein kinase Fyn (Sus scrofa (Pig)).